We begin with the raw amino-acid sequence, 620 residues long: Chaperone protein HtpG (620 aa).

The a; substrate-binding stretch occupies residues 1–334 (MTTTDTAPQS…SEDLPLNLSR (334 aa)). A b region spans residues 335–548 (EMLQNNPQLA…GLGPDRALER (214 aa)). Residues 549–620 (MLAQQNRGAA…RLNRLVLRAL (72 aa)) are c.

This sequence belongs to the heat shock protein 90 family. Homodimer.

The protein localises to the cytoplasm. Functionally, molecular chaperone. Has ATPase activity. The sequence is that of Chaperone protein HtpG from Rhodopseudomonas palustris (strain BisB18).